The sequence spans 85 residues: LCPLDVLQLSSELLDIDGNEVEASRILSDITAFGGIRCPLTVVQSRGIGTIISSPYRFIAEGHPLSLKDMDGWFRVSDDEFNNYK.

In terms of processing, the N-terminus is blocked.

Functionally, inhibition of trypsin. Has anticarcinogenic activity, prevents transformation of DMBA-treated JB6 cells. Has antipromoter activity, prevents promotion by tetradecanoyl phorbal acetate (TPA) in JB6 cells. Prevents tertiary butyl hydroperoxide-induced mutagenesis. Protects AT base pairs and shows antimutagenesis activity in TA102 and TA104 S.typhimurium mutagenesis tests. Inhibits paw edema formation induced by phospholipase A2 in Swiss Wistar mice. Prevents the release of arachidonate, the parent compound for the synthesis of prostaglandins and prostacyclins. Has antimalarial activity, kills P.falciparum. Has antivenom activity, nullifies the lethal effects of N.naja venom and inhibits phospholipase A2 present in N.naja venom. Has antifungal activity, inhibits cilia formation by A.niger. Is not toxic or allergenic. In Curcuma longa (Turmeric), this protein is Turmerin.